Consider the following 68-residue polypeptide: MAKGKDARVIVLLECTSCVRNGFNKQKKPSGVSRYITQRNRHNTPGRLELRKFCPYCHKHTIHGEIKK.

This sequence belongs to the bacterial ribosomal protein bL33 family.

The protein resides in the plastid. It localises to the chloroplast. The sequence is that of Large ribosomal subunit protein bL33c from Piper cenocladum (Ant piper).